The primary structure comprises 380 residues: Alkaline protease (380 aa).

A signal peptide spans 1 to 27; sequence MKKPLGKIVASTALLISVAFSSSIASA. Residues 28-111 constitute a propeptide that is removed on maturation; sequence AEEAKEKYLI…IEEDAEVTTM (84 aa). Residues 34–111 form the Inhibitor I9 domain; the sequence is KYLIGFNEQE…IEEDAEVTTM (78 aa). Gln113 contacts Ca(2+). The Peptidase S8 domain maps to 116–379; sequence PWGISRVQAP…SGLVNAEAAT (264 aa). The active-site Charge relay system is Asp143. Residue Asp151 coordinates Ca(2+). Catalysis depends on His173, which acts as the Charge relay system. Ca(2+) contacts are provided by Leu184, Asn186, Ile188, Val190, Ala274, Tyr276, and Ala279. Ser326 (charge relay system) is an active-site residue.

It belongs to the peptidase S8 family. Requires Ca(2+) as cofactor.

It is found in the secreted. This is Alkaline protease from Shouchella clausii (Alkalihalobacillus clausii).